The primary structure comprises 94 residues: Putative pterin-4-alpha-carbinolamine dehydratase (94 aa).

It belongs to the pterin-4-alpha-carbinolamine dehydratase family.

It catalyses the reaction (4aS,6R)-4a-hydroxy-L-erythro-5,6,7,8-tetrahydrobiopterin = (6R)-L-erythro-6,7-dihydrobiopterin + H2O. The sequence is that of Putative pterin-4-alpha-carbinolamine dehydratase from Mycobacterium avium (strain 104).